A 539-amino-acid chain; its full sequence is Histone-arginine methyltransferase CARMER (539 aa).

The 310-residue stretch at 149 to 458 folds into the SAM-dependent MTase PRMT-type domain; sequence ASQYFQFYGY…QSYDVTIDLH (310 aa). Q162, R171, G195, E217, E246, and T274 together coordinate S-adenosyl-L-methionine. Position 509 is an asymmetric dimethylarginine; by autocatalysis (R509).

The protein belongs to the class I-like SAM-binding methyltransferase superfamily. Protein arginine N-methyltransferase family. As to quaternary structure, homodimer. The dimethylated protein is the major form.

The protein resides in the cytoplasm. The protein localises to the nucleus. The catalysed reaction is L-arginyl-[protein] + 2 S-adenosyl-L-methionine = N(omega),N(omega)-dimethyl-L-arginyl-[protein] + 2 S-adenosyl-L-homocysteine + 2 H(+). Methylates (mono- and asymmetric dimethylation) the guanidino nitrogens of arginyl residues in proteins. May methylate histone H3 at 'Arg-17' and activate transcription via chromatin remodeling. This is Histone-arginine methyltransferase CARMER (Art4) from Drosophila mojavensis (Fruit fly).